Here is a 130-residue protein sequence, read N- to C-terminus: Large ribosomal subunit protein bL20 (130 aa).

It belongs to the bacterial ribosomal protein bL20 family.

Functionally, binds directly to 23S ribosomal RNA and is necessary for the in vitro assembly process of the 50S ribosomal subunit. It is not involved in the protein synthesizing functions of that subunit. The protein is Large ribosomal subunit protein bL20 of Nocardioides sp. (strain ATCC BAA-499 / JS614).